A 275-amino-acid polypeptide reads, in one-letter code: Ciliary microtubule inner protein 2B (275 aa).

Disordered stretches follow at residues 62-84 and 125-169; these read PPIR…RGQE and EKQG…SPYS. Basic and acidic residues-rich tracts occupy residues 71 to 84 and 125 to 147; these read EVPR…RGQE and EKQG…KDQV.

It belongs to the CIMIP2 family. In terms of assembly, microtubule inner protein component of sperm flagellar doublet microtubules. As to expression, expressed in airway epithelial cells.

It localises to the cytoplasm. It is found in the cytoskeleton. The protein resides in the cilium axoneme. The protein localises to the flagellum axoneme. Microtubule inner protein (MIP) part of the dynein-decorated doublet microtubules (DMTs) in cilia axoneme, which is required for motile cilia beating. This chain is Ciliary microtubule inner protein 2B, found in Homo sapiens (Human).